The chain runs to 142 residues: Phosphoribosyl-AMP cyclohydrolase (142 aa).

Asp92 contributes to the Mg(2+) binding site. Position 93 (Cys93) interacts with Zn(2+). Residues Asp94 and Asp96 each contribute to the Mg(2+) site. Cys109 and Cys116 together coordinate Zn(2+).

Belongs to the PRA-CH family. As to quaternary structure, homodimer. Mg(2+) serves as cofactor. Requires Zn(2+) as cofactor.

The protein resides in the cytoplasm. The enzyme catalyses 1-(5-phospho-beta-D-ribosyl)-5'-AMP + H2O = 1-(5-phospho-beta-D-ribosyl)-5-[(5-phospho-beta-D-ribosylamino)methylideneamino]imidazole-4-carboxamide. The protein operates within amino-acid biosynthesis; L-histidine biosynthesis; L-histidine from 5-phospho-alpha-D-ribose 1-diphosphate: step 3/9. In terms of biological role, catalyzes the hydrolysis of the adenine ring of phosphoribosyl-AMP. The protein is Phosphoribosyl-AMP cyclohydrolase of Alcanivorax borkumensis (strain ATCC 700651 / DSM 11573 / NCIMB 13689 / SK2).